Here is a 129-residue protein sequence, read N- to C-terminus: Small ribosomal subunit protein eS6 (129 aa).

This sequence belongs to the eukaryotic ribosomal protein eS6 family.

This Archaeoglobus fulgidus (strain ATCC 49558 / DSM 4304 / JCM 9628 / NBRC 100126 / VC-16) protein is Small ribosomal subunit protein eS6.